Consider the following 844-residue polypeptide: Beta-mannosidase B (844 aa).

Glu432 acts as the Proton donor in catalysis. Asn723 carries N-linked (GlcNAc...) asparagine glycosylation.

It belongs to the glycosyl hydrolase 2 family. Beta-mannosidase B subfamily.

It carries out the reaction Hydrolysis of terminal, non-reducing beta-D-mannose residues in beta-D-mannosides.. It functions in the pathway glycan metabolism; N-glycan degradation. Its function is as follows. Exoglycosidase that cleaves the single beta-linked mannose residue from the non-reducing end of beta-mannosidic oligosaccharides of various complexity and length. Prefers mannobiose over mannotriose and has no activity against polymeric mannan. Is also severely restricted by galactosyl substitutions at the +1 subsite. This is Beta-mannosidase B (mndB) from Aspergillus flavus (strain ATCC 200026 / FGSC A1120 / IAM 13836 / NRRL 3357 / JCM 12722 / SRRC 167).